Reading from the N-terminus, the 104-residue chain is MSNRDLFAELSSALVEAKQHSEGKLTLKTHHVNDVGELNISPDEIVSIREQFNMSRGVFARLLHTSSRTLENWEQGRSVPNGQAVTLLKLVQRHPETLSHIAEL.

One can recognise an HTH cro/C1-type domain in the interval 45 to 98 (IVSIREQFNMSRGVFARLLHTSSRTLENWEQGRSVPNGQAVTLLKLVQRHPETL). The H-T-H motif DNA-binding region spans 56-75 (RGVFARLLHTSSRTLENWEQ).

Its function is as follows. Antitoxin component of a type II toxin-antitoxin (TA) system that counteracts the effect of the HigB-2 toxin. Binds to its own promoter and regulates transcription of the higB-2/higA-2 operon. The chain is Antitoxin HigA-2 (higA-2) from Vibrio cholerae serotype O1 (strain ATCC 39315 / El Tor Inaba N16961).